We begin with the raw amino-acid sequence, 113 residues long: U11-theraphotoxin-Hhn1a (113 aa).

Positions 1–21 (MNTVRVTFLLVFVLAVSLGQA) are cleaved as a signal peptide. Residues 22–74 (DKDENRMEMQEKAEQGKSYLDFAENLLLQKLEELEAKLLEEDSEESRNSRQKR) constitute a propeptide that is removed on maturation. 3 cysteine pairs are disulfide-bonded: C75/C90, C82/C95, and C89/C110.

This sequence belongs to the neurotoxin 14 (magi-1) family. 01 (HNTX-16) subfamily. In terms of tissue distribution, expressed by the venom gland.

It localises to the secreted. In terms of biological role, probable ion channel inhibitor. The sequence is that of U11-theraphotoxin-Hhn1a from Cyriopagopus hainanus (Chinese bird spider).